Here is a 479-residue protein sequence, read N- to C-terminus: Glycine betaine methyltransferase (479 aa).

The protein belongs to the trimethylamine methyltransferase family.

It carries out the reaction Co(I)-[glycine betaine-specific corrinoid protein] + glycine betaine + H(+) = methyl-Co(III)-[glycine betaine-specific corrinoid protein] + N,N-dimethylglycine. In terms of biological role, methyltransferase able to methylate free cob(I)alamin in vitro, using glycine betaine as the methyl donor, yealding methylcobalamin (methylCbl) and dimethylglycine. In vivo, probably carries out the methylation of a corrinoid protein, likely the adjacently encoded DSY3155, with glycine betaine, to then supply methyl groups to tetrahydrofolate (THF) for ultimate conversion to carbon dioxide; oxidation of the methyl group would also provide reducing equivalents for anaerobic respiration. Thus, may function in the pathway that allows anaerobic methylotrophic growth of D.hafniense using glycine betaine. Cannot use quaternary amines such as carnitine and choline as substrates, nor tertiary amines such as dimethylglycine or trimethylamine. This chain is Glycine betaine methyltransferase, found in Desulfitobacterium hafniense (strain Y51).